A 312-amino-acid polypeptide reads, in one-letter code: MEKEIVVVTGPTASGKSAACDIIADDLNCRVINCDSKQIYHGVPILTDQPVSVRDIHKLYGYVAPTQNYSAGLWLQDVKREVQQAWDDNVLPVITGGSGMYINSLVNGISDIPAIDPEVRKTARNLLESLGNAAFYEALVARDSNAARLHHNNTHQILRAFEVLEQTGTSIFTWWERSPRIKPFENCEVLVLLPPRNKLYDKINRRFLTMMQTDAISEVKYLMSLNLPMHAPVMKAHGAPEIVQYLQGKIEFMEAVEIAQKNTRHYAKRQCTWFRTQLPCDTRFFSSQNEIIDHVLAQYASKYPRTHTRPCN.

An ATP-binding site is contributed by 10-17 (GPTASGKS). 12-17 (TASGKS) contacts substrate. The segment at 35 to 38 (DSKQ) is interaction with substrate tRNA.

This sequence belongs to the IPP transferase family. Monomer. Mg(2+) serves as cofactor.

It carries out the reaction adenosine(37) in tRNA + dimethylallyl diphosphate = N(6)-dimethylallyladenosine(37) in tRNA + diphosphate. In terms of biological role, catalyzes the transfer of a dimethylallyl group onto the adenine at position 37 in tRNAs that read codons beginning with uridine, leading to the formation of N6-(dimethylallyl)adenosine (i(6)A). The chain is tRNA dimethylallyltransferase from Anaplasma phagocytophilum (strain HZ).